A 200-amino-acid chain; its full sequence is dITP/XTP pyrophosphatase (200 aa).

5-10 (TRNEGK) serves as a coordination point for substrate. The active-site Proton acceptor is the aspartate 67. Aspartate 67 contacts Mg(2+). Residues serine 68, 151–154 (FGYD), lysine 174, and 179–180 (HR) each bind substrate.

The protein belongs to the HAM1 NTPase family. As to quaternary structure, homodimer. Mg(2+) serves as cofactor.

The catalysed reaction is XTP + H2O = XMP + diphosphate + H(+). It carries out the reaction dITP + H2O = dIMP + diphosphate + H(+). It catalyses the reaction ITP + H2O = IMP + diphosphate + H(+). Pyrophosphatase that catalyzes the hydrolysis of nucleoside triphosphates to their monophosphate derivatives, with a high preference for the non-canonical purine nucleotides XTP (xanthosine triphosphate), dITP (deoxyinosine triphosphate) and ITP. Seems to function as a house-cleaning enzyme that removes non-canonical purine nucleotides from the nucleotide pool, thus preventing their incorporation into DNA/RNA and avoiding chromosomal lesions. The chain is dITP/XTP pyrophosphatase from Streptococcus pneumoniae serotype 4 (strain ATCC BAA-334 / TIGR4).